Reading from the N-terminus, the 1227-residue chain is Pesticidal crystal protein Cry1Be (1227 aa).

It belongs to the delta endotoxin family.

Its function is as follows. Promotes colloidosmotic lysis by binding to the midgut epithelial cells of many lepidopteran larvae. The protein is Pesticidal crystal protein Cry1Be (cry1Be) of Bacillus thuringiensis.